The primary structure comprises 375 residues: Biotin synthase, mitochondrial (375 aa).

A mitochondrion-targeting transit peptide spans 1–16; it reads MMSTIYRHLSTARPAL. Residues 81 to 310 enclose the Radical SAM core domain; that stretch reads HDPTKVQLCT…IATARIVMPK (230 aa). Positions 99, 103, and 106 each coordinate [4Fe-4S] cluster. Positions 143, 176, 236, and 314 each coordinate [2Fe-2S] cluster.

It belongs to the radical SAM superfamily. Biotin synthase family. The cofactor is [4Fe-4S] cluster. Requires [2Fe-2S] cluster as cofactor.

Its subcellular location is the mitochondrion. It catalyses the reaction (4R,5S)-dethiobiotin + (sulfur carrier)-SH + 2 reduced [2Fe-2S]-[ferredoxin] + 2 S-adenosyl-L-methionine = (sulfur carrier)-H + biotin + 2 5'-deoxyadenosine + 2 L-methionine + 2 oxidized [2Fe-2S]-[ferredoxin]. The protein operates within cofactor biosynthesis; biotin biosynthesis; biotin from 7,8-diaminononanoate: step 2/2. This chain is Biotin synthase, mitochondrial (BIO2), found in Saccharomyces cerevisiae (strain ATCC 204508 / S288c) (Baker's yeast).